The sequence spans 166 residues: Cytochrome b (166 aa).

4 helical membrane passes run 15–35 (FKDI…VLIN), 77–97 (LGGV…PFYN), 109–129 (INQI…WIGA), and 136–156 (YVLL…INPL).

It belongs to the cytochrome b family. The main subunits of complex b-c1 are: cytochrome b, cytochrome c1 and the Rieske protein. It depends on heme as a cofactor.

It is found in the mitochondrion inner membrane. Functionally, component of the ubiquinol-cytochrome c reductase complex (complex III or cytochrome b-c1 complex) that is part of the mitochondrial respiratory chain. The b-c1 complex mediates electron transfer from ubiquinol to cytochrome c. Contributes to the generation of a proton gradient across the mitochondrial membrane that is then used for ATP synthesis. In Drosophila subobscura (Fruit fly), this protein is Cytochrome b (mt:Cyt-b).